The primary structure comprises 674 residues: Methionine--tRNA ligase (674 aa).

Residues 11 to 21 (PYANGDLHLGH) carry the 'HIGH' region motif. Zn(2+) is bound by residues C142, C145, C155, and C158. Residues 330–334 (KMSKS) carry the 'KMSKS' region motif. K333 contacts ATP. In terms of domain architecture, tRNA-binding spans 574–674 (DFMKVDLRIA…EGAQPGMRVK (101 aa)).

The protein belongs to the class-I aminoacyl-tRNA synthetase family. MetG type 1 subfamily. In terms of assembly, homodimer. Zn(2+) is required as a cofactor.

The protein resides in the cytoplasm. It carries out the reaction tRNA(Met) + L-methionine + ATP = L-methionyl-tRNA(Met) + AMP + diphosphate. Is required not only for elongation of protein synthesis but also for the initiation of all mRNA translation through initiator tRNA(fMet) aminoacylation. This chain is Methionine--tRNA ligase, found in Francisella tularensis subsp. holarctica (strain OSU18).